Consider the following 694-residue polypeptide: Elongation factor G (694 aa).

The tr-type G domain maps to Ser9–Lys288. GTP-binding positions include Ala18–Thr25, Asp82–His86, and Asn136–Asp139.

Belongs to the TRAFAC class translation factor GTPase superfamily. Classic translation factor GTPase family. EF-G/EF-2 subfamily.

It localises to the cytoplasm. Functionally, catalyzes the GTP-dependent ribosomal translocation step during translation elongation. During this step, the ribosome changes from the pre-translocational (PRE) to the post-translocational (POST) state as the newly formed A-site-bound peptidyl-tRNA and P-site-bound deacylated tRNA move to the P and E sites, respectively. Catalyzes the coordinated movement of the two tRNA molecules, the mRNA and conformational changes in the ribosome. This chain is Elongation factor G, found in Chlamydia abortus (strain DSM 27085 / S26/3) (Chlamydophila abortus).